Reading from the N-terminus, the 237-residue chain is Ras-related protein Rab-33A (237 aa).

GTP contacts are provided by Asn-46, Val-47, Gly-48, Lys-49, Thr-50, Cys-51, Thr-65, and Thr-68. Thr-50 contacts Mg(2+). A Switch 1 motif is present at residues 59–71 (GTFPDKTEATIGV). Mg(2+)-binding residues include Thr-68 and Asp-91. The Switch 2 motif lies at 92–111 (TAGQERFRKSMVEHYYRNVH). Gly-94, Asn-151, Lys-152, Asp-154, Ala-182, and Lys-183 together coordinate GTP. Residues Cys-235 and Cys-237 are each lipidated (S-geranylgeranyl cysteine). Cys-237 carries the cysteine methyl ester modification.

The protein belongs to the small GTPase superfamily. Rab family. Interacts with ATG16L1; the interaction is important for autophagosome formation. Requires Mg(2+) as cofactor. As to expression, expressed predominantly in brain. Weak expression in ovary.

It localises to the cell membrane. It carries out the reaction GTP + H2O = GDP + phosphate + H(+). Its activity is regulated as follows. Regulated by guanine nucleotide exchange factors (GEFs) which promote the exchange of bound GDP for free GTP. Regulated by GTPase activating proteins (GAPs) which increase the GTP hydrolysis activity. Inhibited by GDP dissociation inhibitors (GDIs). In terms of biological role, the small GTPases Rab are key regulators of intracellular membrane trafficking, from the formation of transport vesicles to their fusion with membranes. Rabs cycle between an inactive GDP-bound form and an active GTP-bound form that is able to recruit to membranes different sets of downstream effectors directly responsible for vesicle formation, movement, tethering and fusion. Modulates autophagosome formation through interaction with ATG16L1. The sequence is that of Ras-related protein Rab-33A from Mus musculus (Mouse).